We begin with the raw amino-acid sequence, 484 residues long: ATP synthase subunit beta (484 aa).

152–159 (GGAGVGKT) lines the ATP pocket.

It belongs to the ATPase alpha/beta chains family. In terms of assembly, F-type ATPases have 2 components, CF(1) - the catalytic core - and CF(0) - the membrane proton channel. CF(1) has five subunits: alpha(3), beta(3), gamma(1), delta(1), epsilon(1). CF(0) has three main subunits: a(1), b(2) and c(9-12). The alpha and beta chains form an alternating ring which encloses part of the gamma chain. CF(1) is attached to CF(0) by a central stalk formed by the gamma and epsilon chains, while a peripheral stalk is formed by the delta and b chains.

Its subcellular location is the cell inner membrane. The enzyme catalyses ATP + H2O + 4 H(+)(in) = ADP + phosphate + 5 H(+)(out). In terms of biological role, produces ATP from ADP in the presence of a proton gradient across the membrane. The catalytic sites are hosted primarily by the beta subunits. This Campylobacter lari (strain RM2100 / D67 / ATCC BAA-1060) protein is ATP synthase subunit beta.